The chain runs to 124 residues: Cytochrome c2 (124 aa).

The residue at position 1 (glutamine 1) is a Pyrrolidone carboxylic acid. 4 residues coordinate heme c: cysteine 15, cysteine 18, histidine 19, and methionine 100.

Post-translationally, binds 1 heme c group covalently per subunit.

The protein localises to the periplasm. Functionally, cytochrome c2 is found mainly in purple, non-sulfur, photosynthetic bacteria where it functions as the electron donor to the oxidized bacteriochlorophyll in the photophosphorylation pathway. However, it may also have a role in the respiratory chain and is found in some non-photosynthetic bacteria. This chain is Cytochrome c2 (cycA), found in Cereibacter sphaeroides (Rhodobacter sphaeroides).